The following is a 198-amino-acid chain: MPVEWLLIPFAYLLGSVSSAVIVSRTLGLPDPRQEGSKNPGATNVLRLGGKRAAILTLLGDASKGLIPLLIAKSMAVSPPLFAAIGFAAFVGHLYPVFFQFKGGKGVATALGVLLGFAWPVGLMALLTWIGVAALFRFSSLSALAAAVLAPVYVWLWLGSAELVVATLFMSMLLVYRHKGNIERLLKGEEARLGAKRL.

Transmembrane regions (helical) follow at residues 3-23 (VEWL…AVIV), 81-101 (LFAA…FFQF), 113-133 (VLLG…IGVA), and 153-175 (YVWL…MLLV).

This sequence belongs to the PlsY family. Probably interacts with PlsX.

The protein localises to the cell inner membrane. It carries out the reaction an acyl phosphate + sn-glycerol 3-phosphate = a 1-acyl-sn-glycero-3-phosphate + phosphate. It participates in lipid metabolism; phospholipid metabolism. Functionally, catalyzes the transfer of an acyl group from acyl-phosphate (acyl-PO(4)) to glycerol-3-phosphate (G3P) to form lysophosphatidic acid (LPA). This enzyme utilizes acyl-phosphate as fatty acyl donor, but not acyl-CoA or acyl-ACP. The protein is Glycerol-3-phosphate acyltransferase of Methylococcus capsulatus (strain ATCC 33009 / NCIMB 11132 / Bath).